Reading from the N-terminus, the 72-residue chain is uncharacterized protein (72 aa).

Residues 51–72 are disordered; it reads AKGGRQRGETVVVDDQCKEHKE.

This sequence belongs to the YiiE family.

This is an uncharacterized protein from Escherichia coli O6:K15:H31 (strain 536 / UPEC).